The primary structure comprises 110 residues: Iron-sulfur cluster assembly protein CyaY (110 aa).

Belongs to the frataxin family.

Its function is as follows. Involved in iron-sulfur (Fe-S) cluster assembly. May act as a regulator of Fe-S biogenesis. This Azotobacter vinelandii (strain DJ / ATCC BAA-1303) protein is Iron-sulfur cluster assembly protein CyaY.